A 527-amino-acid polypeptide reads, in one-letter code: Probable protein kinase UbiB (527 aa).

Residues 23–43 form a helical membrane-spanning segment; that stretch reads ELLLELPLPFWLRALSWLLPW. Positions 125–488 constitute a Protein kinase domain; the sequence is RFDSQPLASA…ESDARDQWPL (364 aa). Residues 131 to 139 and Lys-153 contribute to the ATP site; that span reads LASASVAQV. The active-site Proton acceptor is the Asp-288. Residues 504 to 524 form a helical membrane-spanning segment; it reads LAPLLATWPAWLMVGGGLYLV.

The protein belongs to the ABC1 family. UbiB subfamily.

Its subcellular location is the cell inner membrane. Its pathway is cofactor biosynthesis; ubiquinone biosynthesis [regulation]. Is probably a protein kinase regulator of UbiI activity which is involved in aerobic coenzyme Q (ubiquinone) biosynthesis. The polypeptide is Probable protein kinase UbiB (Ectopseudomonas mendocina (strain ymp) (Pseudomonas mendocina)).